Reading from the N-terminus, the 630-residue chain is tRNA uridine 5-carboxymethylaminomethyl modification enzyme MnmG (630 aa).

An FAD-binding site is contributed by 13–18 (GGGHAG). 273 to 287 (GPRYCPSIEDKIHRF) is an NAD(+) binding site.

Belongs to the MnmG family. As to quaternary structure, homodimer. Heterotetramer of two MnmE and two MnmG subunits. FAD serves as cofactor.

The protein resides in the cytoplasm. Functionally, NAD-binding protein involved in the addition of a carboxymethylaminomethyl (cmnm) group at the wobble position (U34) of certain tRNAs, forming tRNA-cmnm(5)s(2)U34. The polypeptide is tRNA uridine 5-carboxymethylaminomethyl modification enzyme MnmG (Pseudomonas putida (strain ATCC 700007 / DSM 6899 / JCM 31910 / BCRC 17059 / LMG 24140 / F1)).